A 131-amino-acid chain; its full sequence is Guanyl-specific ribonuclease F1 (131 aa).

The signal sequence occupies residues 1–25 (MLFFKSIASLAALVSLAVASPIESR). Q26 bears the Pyrrolidone carboxylic acid mark. Intrachain disulfides connect C31–C127 and C49–C108. H65 is a catalytic residue. E83 serves as the catalytic Proton acceptor. Catalysis depends on H116, which acts as the Proton donor.

Belongs to the ribonuclease N1/T1 family.

The enzyme catalyses [RNA] containing guanosine + H2O = an [RNA fragment]-3'-guanosine-3'-phosphate + a 5'-hydroxy-ribonucleotide-3'-[RNA fragment].. The polypeptide is Guanyl-specific ribonuclease F1 (Fusarium fujikuroi (Bakanae and foot rot disease fungus)).